A 452-amino-acid chain; its full sequence is Phosphoglucosamine mutase (452 aa).

S108 functions as the Phosphoserine intermediate in the catalytic mechanism. Mg(2+) is bound by residues S108, D247, D249, and D251. S108 is modified (phosphoserine).

The protein belongs to the phosphohexose mutase family. It depends on Mg(2+) as a cofactor. In terms of processing, activated by phosphorylation.

It catalyses the reaction alpha-D-glucosamine 1-phosphate = D-glucosamine 6-phosphate. Catalyzes the conversion of glucosamine-6-phosphate to glucosamine-1-phosphate. The sequence is that of Phosphoglucosamine mutase from Paraburkholderia xenovorans (strain LB400).